The chain runs to 209 residues: Germin-like protein (209 aa).

Positions 1 to 18 (MIVPIFFLFSLLFSSSHG) are cleaved as a signal peptide. A disulfide bridge links Cys-24 with Cys-39. The Cupin type-1 domain occupies 53-199 (SGLGITGNTT…ASFLDPAEIK (147 aa)). Residue Asn-60 is glycosylated (N-linked (GlcNAc...) asparagine). Positions 101, 103, 108, and 147 each coordinate Mn(2+).

It localises to the secreted. It is found in the extracellular space. The protein localises to the apoplast. In terms of biological role, has antibacterial activity against B.subtilis (MIC=5 ug), B.cereus (MIC=50 ug), A.hydrophila (MIC=2.5 ug), S.marcescens(MIC=10 ug), S.enterica (MIC=10 ug), P.entomophila (MIC=2.5 ug) and P.rhodesiae (MIC=10 ug). Has antifungal activity against F.solani KACC 40384 and F.oxysporum KACC 40032. Probably has no oxalate oxidase activity even if the active site is conserved. This is Germin-like protein from Morus alba (White mulberry).